A 146-amino-acid polypeptide reads, in one-letter code: Large ribosomal subunit protein uL15 (146 aa).

The span at 1–18 shows a compositional bias: basic and acidic residues; it reads MKLHELKPTPGSRHERNR. Residues 1 to 69 are disordered; the sequence is MKLHELKPTP…RLPKRGFNNP (69 aa). Residues 42 to 52 are compositionally biased toward gly residues; that stretch reads SGGGVRPGFEG.

It belongs to the universal ribosomal protein uL15 family. In terms of assembly, part of the 50S ribosomal subunit.

Binds to the 23S rRNA. The protein is Large ribosomal subunit protein uL15 of Exiguobacterium sp. (strain ATCC BAA-1283 / AT1b).